Here is a 157-residue protein sequence, read N- to C-terminus: MALSLPPRPALLFLVLMSVTLMASAFPQPQLRPLQSNLPAIGQEDSKGEQWEVVYPSISLRDWSIQMLTAPDFGAAKTGREQLVADDWLPLSQSQMEEELVKGWTGDWPSRVGHQQKRNIVVADDAAFREKSKLLTAMERQKWLNSYMQKLLVVNSK.

The signal sequence occupies residues 1–25 (MALSLPPRPALLFLVLMSVTLMASA). The propeptide occupies 26-116 (FPQPQLRPLQ…DWPSRVGHQQ (91 aa)).

The protein belongs to the parathyroid hormone family.

It localises to the secreted. Plays a role as a potent and selective agonist of pth2r resulting in adenyl cyclase activation and intracellular calcium level elevation. The protein is Tuberoinfundibular peptide of 39 residues of Danio rerio (Zebrafish).